Consider the following 419-residue polypeptide: Glycine, glutamate and proline-rich protein (419 aa).

The signal sequence occupies residues 1 to 16 (MKCLVALFLSLSLVAC). The disordered stretch occupies residues 74 to 152 (VERESEEAEG…VDMCAGESRR (79 aa)). The span at 76-85 (RESEEAEGEG) shows a compositional bias: acidic residues. Basic and acidic residues predominate over residues 86-130 (TDGRGGGEGEREGWGGEREGGEGEREGGEGEREGREGEREGKSSE).

It in the C-terminal section; belongs to the glycosyl hydrolase 23 family. As to expression, component of the acid-insoluble organic matrix of calcified layers of the shell (at protein level).

It localises to the secreted. This Lottia gigantea (Giant owl limpet) protein is Glycine, glutamate and proline-rich protein.